Consider the following 184-residue polypeptide: Adenine phosphoribosyltransferase (184 aa).

This sequence belongs to the purine/pyrimidine phosphoribosyltransferase family. As to quaternary structure, homodimer.

It localises to the cytoplasm. The catalysed reaction is AMP + diphosphate = 5-phospho-alpha-D-ribose 1-diphosphate + adenine. Its pathway is purine metabolism; AMP biosynthesis via salvage pathway; AMP from adenine: step 1/1. In terms of biological role, catalyzes a salvage reaction resulting in the formation of AMP, that is energically less costly than de novo synthesis. The protein is Adenine phosphoribosyltransferase of Blochmanniella pennsylvanica (strain BPEN).